The chain runs to 504 residues: Glucan endo-1,3-beta-glucosidase 7 (504 aa).

An N-terminal signal peptide occupies residues 1-22; the sequence is MALSISIYFLLIFLSHFPSSHA. Catalysis depends on glutamate 119, which acts as the Proton donor. The active-site Nucleophile is glutamate 264. Cysteines 365 and 427 form a disulfide.

This sequence belongs to the glycosyl hydrolase 17 family. Contains two additional disulfide bonds.

The protein resides in the secreted. It localises to the cell wall. The enzyme catalyses Hydrolysis of (1-&gt;3)-beta-D-glucosidic linkages in (1-&gt;3)-beta-D-glucans.. This is Glucan endo-1,3-beta-glucosidase 7 from Arabidopsis thaliana (Mouse-ear cress).